The sequence spans 421 residues: Polygalacturonase (421 aa).

The signal sequence occupies residues 1–20 (MKFSTAIIVSFLFIADFCAA). N-linked (GlcNAc...) asparagine glycosylation is found at Asn-156 and Asn-180. PbH1 repeat units follow at residues 178 to 204 (CKNITFDGFTITAPGDSPNTDGIHMGK) and 205 to 226 (STDVKILNTNIGTGDDCVSIGD). The active-site Proton donor is Asp-219. His-242 is an active-site residue. PbH1 repeat units follow at residues 258-279 (VEGITVKNCTLTATDNGVRIKT) and 289-310 (VSDIHFEDITMTNVKNPVIIDQ). N-linked (GlcNAc...) asparagine glycosylation is present at Asn-265. A disordered region spans residues 394–421 (PGAPAASTTATPAASKTATPAAGKSPAK).

This sequence belongs to the glycosyl hydrolase 28 family. In terms of tissue distribution, pollen specific.

The protein resides in the secreted. It localises to the cell wall. It catalyses the reaction (1,4-alpha-D-galacturonosyl)n+m + H2O = (1,4-alpha-D-galacturonosyl)n + (1,4-alpha-D-galacturonosyl)m.. May function in the depolymerization of the pectin in its walls during pollen tube elongation, or in that of the pistil during pollination. The chain is Polygalacturonase from Medicago sativa (Alfalfa).